We begin with the raw amino-acid sequence, 256 residues long: tRNA (guanine-N(7)-)-methyltransferase (256 aa).

Positions 85, 110, 137, and 159 each coordinate S-adenosyl-L-methionine. Asp-159 is an active-site residue. Lys-163 and Asp-195 together coordinate substrate.

This sequence belongs to the class I-like SAM-binding methyltransferase superfamily. TrmB family.

It catalyses the reaction guanosine(46) in tRNA + S-adenosyl-L-methionine = N(7)-methylguanosine(46) in tRNA + S-adenosyl-L-homocysteine. Its pathway is tRNA modification; N(7)-methylguanine-tRNA biosynthesis. Its function is as follows. Catalyzes the formation of N(7)-methylguanine at position 46 (m7G46) in tRNA. In Rhodopseudomonas palustris (strain BisB5), this protein is tRNA (guanine-N(7)-)-methyltransferase.